A 347-amino-acid chain; its full sequence is Putative adhesin P1-like protein MPN_099 (347 aa).

Positions Phe-282–Pro-300 are enriched in polar residues. The segment at Phe-282–Phe-302 is disordered.

Belongs to the adhesin P1 family.

The polypeptide is Putative adhesin P1-like protein MPN_099 (Mycoplasma pneumoniae (strain ATCC 29342 / M129 / Subtype 1) (Mycoplasmoides pneumoniae)).